A 121-amino-acid polypeptide reads, in one-letter code: Small ribosomal subunit protein uS12c (121 aa).

Belongs to the universal ribosomal protein uS12 family. As to quaternary structure, part of the 30S ribosomal subunit.

It is found in the plastid. The protein resides in the apicoplast. Functionally, with S4 and S5 plays an important role in translational accuracy. Located at the interface of the 30S and 50S subunits. This Toxoplasma gondii protein is Small ribosomal subunit protein uS12c (rps12).